Reading from the N-terminus, the 86-residue chain is uncharacterized protein (86 aa).

The helical transmembrane segment at 12-32 (IIFIFAIIIIVVLCVITYLYL) threads the bilayer.

The protein resides in the membrane. This is an uncharacterized protein from Escherichia coli (strain K12).